A 507-amino-acid polypeptide reads, in one-letter code: Dolichyl pyrophosphate Man9GlcNAc2 alpha-1,3-glucosyltransferase (507 aa).

Over 1 to 2 (ME) the chain is Cytoplasmic. A helical membrane pass occupies residues 3–23 (SWPWMAVVVLLGLTVRWTVSL). The Lumenal portion of the chain corresponds to 24–114 (SSYSGAGKPP…SQAHKLFMRA (91 aa)). Asparagine 59 carries N-linked (GlcNAc...) asparagine glycosylation. The chain crosses the membrane as a helical span at residues 115-135 (TVLAADLLIYVPAVLLYCYSL). Topologically, residues 136–143 (KEISPKRK) are cytoplasmic. Residues 144 to 164 (IASALCILLYPGLILIDYGHF) traverse the membrane as a helical segment. The Lumenal segment spans residues 165-172 (QYNSVSLG). A helical membrane pass occupies residues 173–193 (FALWGVLGVSWDWDLLGSLAF). Residues 194 to 229 (CLALNYKQMELYHSLPFFCFLLGKCFKKGLKGKGLA) lie on the Cytoplasmic side of the membrane. The helical transmembrane segment at 230–250 (LFIRIACTVLASFLLCWLPFL) threads the bilayer. Over 251 to 297 (TEREHALQVVRRLFPVDRGLFEDKVANIWCSVNVFLKIKDTLPRHIQ) the chain is Lumenal. A helical transmembrane segment spans residues 298–318 (IAISFCFTLLSLLPACIKLTV). Topologically, residues 319–332 (RPSCKGFRFTLVSC) are cytoplasmic. A helical transmembrane segment spans residues 333-353 (ALSFFLFSFQVHEKSILLVSL). At 354 to 361 (PVCLVLTE) the chain is on the lumenal side. Residues 362–382 (IPFMSTWFLLVSTFSMLPLLL) form a helical membrane-spanning segment. At 383–385 (KDE) the chain is on the cytoplasmic side. A helical transmembrane segment spans residues 386-406 (LLLPSVVTVMAFVIACGTFFP). Over 407–437 (MLENTSEEQLQLKSFAVSVRRHLPGFTFLPR) the chain is Lumenal. Residues 438–458 (IMQCLFLSSVITMVLLTILSV) form a helical membrane-spanning segment. Over 459–468 (TLDPPQKLPD) the chain is Cytoplasmic. The chain crosses the membrane as a helical span at residues 469-489 (LFPVLICFVSCVNFVFFLVYF). The Lumenal segment spans residues 490–507 (NIVIMWDSKNGRNRKKIE).

This sequence belongs to the ALG6/ALG8 glucosyltransferase family.

It is found in the endoplasmic reticulum membrane. The catalysed reaction is an alpha-D-Man-(1-&gt;2)-alpha-D-Man-(1-&gt;2)-alpha-D-Man-(1-&gt;3)-[alpha-D-Man-(1-&gt;2)-alpha-D-Man-(1-&gt;3)-[alpha-D-Man-(1-&gt;2)-alpha-D-Man-(1-&gt;6)]-alpha-D-Man-(1-&gt;6)]-beta-D-Man-(1-&gt;4)-beta-D-GlcNAc-(1-&gt;4)-alpha-D-GlcNAc-diphospho-di-trans,poly-cis-dolichol + a di-trans,poly-cis-dolichyl beta-D-glucosyl phosphate = an alpha-D-Glc-(1-&gt;3)-alpha-D-Man-(1-&gt;2)-alpha-D-Man-(1-&gt;2)-alpha-D-Man-(1-&gt;3)-[alpha-D-Man-(1-&gt;2)-alpha-D-Man-(1-&gt;3)-[alpha-D-Man-(1-&gt;2)-alpha-D-Man-(1-&gt;6)]-alpha-D-Man-(1-&gt;6)]-beta-D-Man-(1-&gt;4)-beta-D-GlcNAc-(1-&gt;4)-alpha-D-GlcNAc-diphospho-di-trans,poly-cis-dolichol + a di-trans,poly-cis-dolichyl phosphate + H(+). It functions in the pathway protein modification; protein glycosylation. In terms of biological role, dolichyl pyrophosphate Man9GlcNAc2 alpha-1,3-glucosyltransferase that operates in the biosynthetic pathway of dolichol-linked oligosaccharides, the glycan precursors employed in protein asparagine (N)-glycosylation. The assembly of dolichol-linked oligosaccharides begins on the cytosolic side of the endoplasmic reticulum membrane and finishes in its lumen. The sequential addition of sugars to dolichol pyrophosphate produces dolichol-linked oligosaccharides containing fourteen sugars, including two GlcNAcs, nine mannoses and three glucoses. Once assembled, the oligosaccharide is transferred from the lipid to nascent proteins by oligosaccharyltransferases. In the lumen of the endoplasmic reticulum, adds the first glucose residue from dolichyl phosphate glucose (Dol-P-Glc) onto the lipid-linked oligosaccharide intermediate Man(9)GlcNAc(2)-PP-Dol to produce Glc(1)Man(9)GlcNAc(2)-PP-Dol. Glc(1)Man(9)GlcNAc(2)-PP-Dol is a substrate for ALG8, the following enzyme in the biosynthetic pathway. In Mus musculus (Mouse), this protein is Dolichyl pyrophosphate Man9GlcNAc2 alpha-1,3-glucosyltransferase.